Here is a 58-residue protein sequence, read N- to C-terminus: UPF0391 membrane protein Shew185_1413 (58 aa).

2 helical membrane passes run 6–26 (LVFL…IAGA) and 28–48 (AGIA…SLLI).

This sequence belongs to the UPF0391 family.

The protein localises to the cell membrane. This Shewanella baltica (strain OS185) protein is UPF0391 membrane protein Shew185_1413.